We begin with the raw amino-acid sequence, 218 residues long: Large ribosomal subunit protein uL3 (218 aa).

The segment at 134–154 is disordered; that stretch reads GRASHGNSRSHNVPGSIGMAQ. Position 154 is an N5-methylglutamine (Q154).

Belongs to the universal ribosomal protein uL3 family. As to quaternary structure, part of the 50S ribosomal subunit. Forms a cluster with proteins L14 and L19. Post-translationally, methylated by PrmB.

One of the primary rRNA binding proteins, it binds directly near the 3'-end of the 23S rRNA, where it nucleates assembly of the 50S subunit. In Polynucleobacter necessarius subsp. necessarius (strain STIR1), this protein is Large ribosomal subunit protein uL3.